The chain runs to 2669 residues: MSGRGSRKRGRPPKTPNERASGRFNYQLLKKPKYLSEGKSQPSTPSASRGISPQSDEGSRSSHNNHTNRSRGSAAKRGRGRKSAVQPNTSSYSGRKGYESEYHYGSDFGDSEEDKSDNEDDMLLTPSDDESLEVANESESEFSVCSFNQNGVGRPPRPPSPEPVWLQEGRQYAALDLPDSSEDLFIANTHVLRALSIYEVLRRFRHMVRLSPFRFEDLCAALACEEQSALLTEVHIMLLKAILREEDAQGTHFGPLDQKDTVNISLYLIDSITWPEVLRSYVESDKTFDRNVFHILSHTEYPYTGIDNRLEVLQFLSDQFLTSNSIRDVMLQEGPIHYDDHCRVCHRLGDLLCCETCPAVYHLECVDPPMNDVPTEDWQCGLCRSHKVSGVVDCVLPQEKQGVLIRHDSLGVDRHGRKYWFIARRIFIEDQENFTCWYYSTTSKLKLLLSRLDAEELETRLHSQITERRDEIERQMKLTETLTNEHKHTKRSVIEIEQEAKNELLEKEVLDEDEKDGDAKSESQSIEGTKKQEECKMVTRQKSNQLTNGTLHFKLGMEQGFKNYVNQYSTNPIALNKPQRNEERDKRRHLSHKFSLTTASDFKWIGITMGTTDNMITTLRQTLINFESNIAASFLNINWVVNKKIWNAAVMNARRPSEFAVVLLLFQASLKSVVFANVWHEQLGHTTLQRITSAEREERKKLEKREKRERDDEEERNRLAFNYIKYTLGLKHQVWKQKGEEYRVHGQWGWLWLSSSRRCGVRARRAQPLTHNRVYVHYTMGEENDVNEIILVDPRTQRFMQQCESSNVDGQVCHYLPDQYKNVKVIEDVTEKIKGHIDVSKALNAPGRTYYSKVARKSRLDDLLDRRLKLAEVEEQMASKIPSDMKPLLVSSQNNTANSKQTFLEKRLLRLTEVQAKGGPANVNLELVNSLAKQIQTVRLQFSQLNRFAKVFRCYTKECNTNSNAVSQITQNTCYSPLCLQKARAKKELLLLLRKAHTAGNGSKETVAAILGAVKKPSILEQKLTEGKRESTQVAVDDSEEGKPAESEAPLDLLQDWEHARAHAVPFSDSLLTECILVDQECVTNTKIKQEVNASSGCNTTPDSNTQDSDKIDYIESMDVCSNVEIESTEDSIVTGLNSGNAEDVDMTPGWRRKRNQKSKKSYIGTKDVLDQTLDKDIPLNKQNRRFPITARPVKRECVKKYERETFENGNERVYSTSSPRGRVYLLNDAAKLYEQAVKTEDKSTITKKPSYSRYPLISNFLTHKKKRSLLVLPRFELLKLARLGGKSSTNGFHHAAKNNTIWQYQCSRPLFRTCWSYRTSNATSLSSLALQLRILWSCLRWDDMIAKPPSTDGKHQVTTDTEIVTLELLKLRHSGRYGEKTSYLRRKVVIPLEMPKTVREVTSIRSGLRKRKRAESPQPTEPQITEEWVDEDKLELWEIKFMGEKQEKARLSAVTRSVASRQLEASGSNGSNTSTNGALGVAGRVQLAPKLSEDVKEKMEQQLKLQRAVHQQRKLVATGEITRSVTPVKGQVIGSRRVIVKNPDGTTRIIQQAVTQVSRTGGANTAAAAASPTVGGSTSTQSNPSTSTPHKVQIIRGPDGKVSVRGLNPGQQLVQMPDGKLHVLTTTTSSNSAGQGNKMKVPIKPASTSSSPAISSAQTTTNPVTPVIKQIAVKHVTKNSATQSIASSSRVALPLAQIKNKLLLAQQQQQSTSSSPATSSSPVQKIVSKVVNTSTSGQTLQQVFVQSGSKLVVGQNAQGQKVIISTSAAQQQGTSPVQQQQLVQSQPIQQSPQQISMTQVGNQPTQKVIQQIVNTSNVQQQIVVGGQRIILSPGQTIVTQRNVPQSQALQMVQQQIQTQQQQQQHHVVQPQQQFVVQSNQIVQSSPSAQTKLVKQLVVQQQSQQTIEEKTQITTTDSNETGTQQVLVPNSTLAQQLAQGKLQVATVNGQQVIVKPLGNNQAQIVAHIKHQGDGNAHIVTSNSATAVPQANPQTSPVKQQALPPQSPQQVVVQQQQIHQQSPTNFESGVTPITQQPVLTQAVQAPAQQQALSVEESLLQNQPPGTVIKCVTAQVLQTEHGPRIVLQGLVGNDFTAQQLQLVQTQVKQQLMKAQESNGKLGVLGPTKIYLAVQPENAVQSQPPPLTPVHQSAAHQQTNNIEIDADTLATTYEANSTIKDIAINNGDDQENSKCAETENSNITTNESFAGTSSLLEGSEHDEPTNLAGLDISETDLENKQNESFVVTRGYIQKSISNALKQGNLSPELEEKLVCMQKQQENANSTNEWETCSRGSVNEEALTPSRQTDDTEWKIRTSLRRPNAMTTSSQFNRILKKNRSKNDEVAELGEQKQSQLERHKELLKKNILRKRSLLERNLQSEIHEDVKTKVQRHVRPLSNASPDEQSENERSGEPNLDFKRTEVQNPRHGAGRPKKLTRKKEKLYCICRTPYDDTKFYVGCDLCSNWFHGDCVSITEEASKKLSEFICIDCKRARETQQLYCSCRQPYDESQFYICCDKCQDWFHGRCVGILQSEAEFIDEYVCPECQRKNDANAANMKKLTSNDVEELKNLIKQMQLHKSAWPFMEPVDPKEAPDYYKVIKEPMDLKRMEIKLESNTYTKLSEFIGDMTKIFDNCRYYNPKESSFYKCAEALESYFVQKIKNFRENVFDQRT.

The segment covering 1 to 12 (MSGRGSRKRGRP) has biased composition (basic residues). Positions 1 to 121 (MSGRGSRKRG…EEDKSDNEDD (121 aa)) are required for function in nucleosome sliding. The disordered stretch occupies residues 1-125 (MSGRGSRKRG…SDNEDDMLLT (125 aa)). The a.T hook DNA-binding region spans 6–18 (SRKRGRPPKTPNE). Residues 38–56 (GKSQPSTPSASRGISPQSD) show a composition bias toward polar residues. 5 positions are modified to phosphoserine: S40, S52, S55, S59, and S62. The span at 66 to 82 (HTNRSRGSAAKRGRGRK) shows a compositional bias: basic residues. A compositionally biased stretch (acidic residues) spans 109–125 (GDSEEDKSDNEDDMLLT). In terms of domain architecture, DDT spans 188 to 248 (NTHVLRALSI…LKAILREEDA (61 aa)). Residues 339–386 (DDHCRVCHRLGDLLCCETCPAVYHLECVDPPMNDVPTEDWQCGLCRSH) form a PHD-type 1 zinc finger. The stretch at 460–515 (RLHSQITERRDEIERQMKLTETLTNEHKHTKRSVIEIEQEAKNELLEKEVLDEDEK) forms a coiled coil. The segment at 505–538 (LEKEVLDEDEKDGDAKSESQSIEGTKKQEECKMV) is disordered. A compositionally biased stretch (basic and acidic residues) spans 528 to 537 (GTKKQEECKM). Residues 688 to 720 (LQRITSAEREERKKLEKREKRERDDEEERNRLA) adopt a coiled-coil conformation. 3 disordered regions span residues 1026-1048 (EGKR…AESE), 1135-1159 (TGLN…NQKS), and 1406-1425 (RSGL…EPQI). Phosphoserine is present on S1417. Residue T1527 is modified to Phosphothreonine. The segment covering 1559–1590 (SRTGGANTAAAAASPTVGGSTSTQSNPSTSTP) has biased composition (low complexity). Disordered stretches follow at residues 1559–1596 (SRTG…VQII), 2181–2203 (INNG…ITTN), and 2283–2307 (TNEW…QTDD). A compositionally biased stretch (polar residues) spans 2283–2293 (TNEWETCSRGS). Residues 2338-2373 (KNDEVAELGEQKQSQLERHKELLKKNILRKRSLLER) adopt a coiled-coil conformation. A disordered region spans residues 2382–2432 (DVKTKVQRHVRPLSNASPDEQSENERSGEPNLDFKRTEVQNPRHGAGRPKK). Residues S2395, S2398, and S2403 each carry the phosphoserine modification. Positions 2404-2419 (ENERSGEPNLDFKRTE) are enriched in basic and acidic residues. The segment at 2481–2546 (EFICIDCKRA…EYVCPECQRK (66 aa)) adopts a PHD-type 2 zinc-finger fold. The Bromo domain occupies 2556 to 2660 (KLTSNDVEEL…SYFVQKIKNF (105 aa)).

It belongs to the BPTF family. Component of the NURF complex composed of Caf1-55, E(bx), Nurf-38 and Iswi. Interacts with Trl. Interacts with histone H3-K4Me3.

The protein localises to the nucleus. Histone-binding component of NURF (nucleosome remodeling factor), a complex which catalyzes ATP-dependent nucleosome sliding and facilitates transcription of chromatin. Specifically recognizes H3 tails trimethylated on 'Lys-4' (H3K4me3), which mark transcription start sites of virtually all active genes. Required for homeotic gene expression, proper larval blood cell development, normal male X chromosome morphology, ecdysteroid signaling and metamorphosis. In Drosophila melanogaster (Fruit fly), this protein is Nucleosome-remodeling factor subunit NURF301 (E(bx)).